A 608-amino-acid polypeptide reads, in one-letter code: Translation initiation factor RLI1 (608 aa).

4Fe-4S ferredoxin-type domains are found at residues 7–39 (RIAI…KLCI) and 46–75 (KIAF…IINL). ABC transporter domains lie at 70–320 (IQII…FLDG) and 345–568 (LQND…LKNL). Position 110 to 117 (110 to 117 (GTNGIGKS)) interacts with ATP. Position 349 is a phosphoserine (Ser349). Position 385 to 392 (385 to 392 (GENGTGKT)) interacts with ATP.

The protein belongs to the ABC transporter superfamily. ABCE family. In terms of assembly, component of the multifactor complex (MFC) composed of at least RLI1, the eIF2 subunit SUI2, TIF5/eIF5, and the eIF3 subunits PRT1, HCR1, NIP1, RPG1, TIF34 and TIF35. The complex associates with pre-initiation complexes. Interacts with the complex YAE1:LTO1; the complex bridges the interaction between the CIA complex and RLI1.

The protein localises to the cytoplasm. It is found in the nucleus. Component of the multifactor complex (MFC) involved in translation initiation. Required for the binding of MFC to the 40S ribosome. Required for the processing and nuclear export of the 60S and 40S ribosomal subunits. The polypeptide is Translation initiation factor RLI1 (RLI1) (Saccharomyces cerevisiae (strain ATCC 204508 / S288c) (Baker's yeast)).